The sequence spans 140 residues: Large ribosomal subunit protein uL11 (140 aa).

It belongs to the universal ribosomal protein uL11 family. In terms of assembly, part of the ribosomal stalk of the 50S ribosomal subunit. Interacts with L10 and the large rRNA to form the base of the stalk. L10 forms an elongated spine to which L12 dimers bind in a sequential fashion forming a multimeric L10(L12)X complex. One or more lysine residues are methylated.

Its function is as follows. Forms part of the ribosomal stalk which helps the ribosome interact with GTP-bound translation factors. In Karelsulcia muelleri (strain GWSS) (Sulcia muelleri), this protein is Large ribosomal subunit protein uL11.